The primary structure comprises 604 residues: Matrix metalloproteinase-21 (604 aa).

The signal sequence occupies residues 1–22; the sequence is MPSIKLLVWCCLCVISPRLCHS. Positions 23-180 are excised as a propeptide; it reads EKLFHSRDRS…PDPPKIRRKR (158 aa). The tract at residues 132-175 is disordered; the sequence is KPRCGVPDNQMAKKETEKPTAAQSLENKTKDSENVTQQNPDPPK. Positions 133-140 match the Cysteine switch motif; sequence PRCGVPDN. C135 lines the Zn(2+) pocket. N158 and N165 each carry an N-linked (GlcNAc...) asparagine glycan. Residue H318 coordinates Zn(2+). E319 is a catalytic residue. 2 residues coordinate Zn(2+): H322 and H328. C364 and C595 are oxidised to a cystine. 4 Hemopexin repeats span residues 365–424, 426–482, 483–531, and 538–594; these read EGPF…WHGI, VQNI…FPGI, PSPI…FPAV, and KGNI…WFDI. Residues N404 and N407 are each glycosylated (N-linked (GlcNAc...) asparagine).

This sequence belongs to the peptidase M10A family. It depends on Zn(2+) as a cofactor. Requires Ca(2+) as cofactor. In terms of processing, the precursor is cleaved by a furin endopeptidase.

Its subcellular location is the secreted. In terms of biological role, plays a specialized role in the generation of left-right asymmetry during embryogenesis. May act as a negative regulator of the NOTCH-signaling pathway. The polypeptide is Matrix metalloproteinase-21 (mmp21) (Xenopus laevis (African clawed frog)).